A 346-amino-acid chain; its full sequence is GTP 3',8-cyclase (346 aa).

Positions Gln10–Leu240 constitute a Radical SAM core domain. Arg19 is a binding site for GTP. Cys26 and Cys30 together coordinate [4Fe-4S] cluster. Tyr32 is an S-adenosyl-L-methionine binding site. Position 33 (Cys33) interacts with [4Fe-4S] cluster. A GTP-binding site is contributed by Arg65. Gly69 is an S-adenosyl-L-methionine binding site. A GTP-binding site is contributed by Thr104. Ser129 is a binding site for S-adenosyl-L-methionine. Lys177 provides a ligand contact to GTP. Met211 serves as a coordination point for S-adenosyl-L-methionine. 2 residues coordinate [4Fe-4S] cluster: Cys274 and Cys277. Residue Arg279–Arg281 participates in GTP binding. Position 291 (Cys291) interacts with [4Fe-4S] cluster. The disordered stretch occupies residues Ser326–Gly346.

It belongs to the radical SAM superfamily. MoaA family. As to quaternary structure, monomer and homodimer. Requires [4Fe-4S] cluster as cofactor.

The enzyme catalyses GTP + AH2 + S-adenosyl-L-methionine = (8S)-3',8-cyclo-7,8-dihydroguanosine 5'-triphosphate + 5'-deoxyadenosine + L-methionine + A + H(+). It functions in the pathway cofactor biosynthesis; molybdopterin biosynthesis. Catalyzes the cyclization of GTP to (8S)-3',8-cyclo-7,8-dihydroguanosine 5'-triphosphate. The sequence is that of GTP 3',8-cyclase from Parasynechococcus marenigrum (strain WH8102).